We begin with the raw amino-acid sequence, 629 residues long: Phosphoglucomutase, chloroplastic (629 aa).

The N-terminal 69 residues, 1-69 (MSSTYARFDT…SSSSGPIIAG (69 aa)), are a transit peptide targeting the chloroplast. Arg94 and Ser187 together coordinate alpha-D-glucose 1,6-bisphosphate. The active-site Phosphoserine intermediate is Ser187. Positions 187, 352, 354, and 356 each coordinate Mg(2+). The residue at position 187 (Ser187) is a Phosphoserine. Residues Asp356, Arg357, Thr420, Glu439, Ser441, and Lys452 each contribute to the alpha-D-glucose 1,6-bisphosphate site.

Belongs to the phosphohexose mutase family. As to quaternary structure, monomer. Mg(2+) serves as cofactor.

The protein resides in the plastid. It is found in the chloroplast. The catalysed reaction is alpha-D-glucose 1-phosphate = alpha-D-glucose 6-phosphate. The enzyme catalyses O-phospho-L-seryl-[protein] + alpha-D-glucose 1-phosphate = alpha-D-glucose 1,6-bisphosphate + L-seryl-[protein]. It carries out the reaction alpha-D-glucose 1,6-bisphosphate + L-seryl-[protein] = O-phospho-L-seryl-[protein] + alpha-D-glucose 6-phosphate. With respect to regulation, inhibited by the Calvin cycle intermediates fructose-1,6-bisphosphate and ribulose-1,5-bisphosphate. Catalyzes the reversible isomerization of alpha-D-glucose 1-phosphate to alpha-D-glucose 6-phosphate. The mechanism proceeds via the intermediate compound alpha-D-glucose 1,6-bisphosphate. This enzyme participates in both the breakdown and synthesis of glucose. The protein is Phosphoglucomutase, chloroplastic (PGMP) of Brassica napus (Rape).